Here is an 80-residue protein sequence, read N- to C-terminus: UPF0154 protein MGAS10270_Spy0296 (80 aa).

A helical membrane pass occupies residues alanine 4–isoleucine 24.

Belongs to the UPF0154 family.

It is found in the cell membrane. The chain is UPF0154 protein MGAS10270_Spy0296 from Streptococcus pyogenes serotype M2 (strain MGAS10270).